A 367-amino-acid polypeptide reads, in one-letter code: Putative methylthioribose-1-phosphate isomerase (367 aa).

Residues 65–67 (RGA), arginine 106, and glutamine 218 each bind substrate. The active-site Proton donor is the aspartate 259. 269 to 270 (NK) is a substrate binding site.

This sequence belongs to the eIF-2B alpha/beta/delta subunits family. MtnA subfamily.

It catalyses the reaction 5-(methylsulfanyl)-alpha-D-ribose 1-phosphate = 5-(methylsulfanyl)-D-ribulose 1-phosphate. Its function is as follows. Catalyzes the interconversion of methylthioribose-1-phosphate (MTR-1-P) into methylthioribulose-1-phosphate (MTRu-1-P). The protein is Putative methylthioribose-1-phosphate isomerase of Sulfolobus acidocaldarius (strain ATCC 33909 / DSM 639 / JCM 8929 / NBRC 15157 / NCIMB 11770).